A 513-amino-acid chain; its full sequence is E3 ubiquitin-protein ligase RNF25 (513 aa).

In terms of domain architecture, RWD spans 9–117 (SEIEVLQSIY…ERAKEILTDS (109 aa)). Positions 124, 127, 142, 144, 147, 150, 187, and 190 each coordinate Zn(2+). The RING-type; atypical zinc-finger motif lies at 124 to 191 (CVICLYDFKE…ELAVVCPVCR (68 aa)). The segment at 261–513 (NLSDTPGMTD…EKEFRKEGVL (253 aa)) is disordered. The segment covering 271 to 297 (SSGAESSQSLPSSSPDSTSTTQTSQNQ) has biased composition (low complexity). 2 stretches are compositionally biased toward polar residues: residues 345-397 (SDKI…QDML) and 406-423 (EVSQQKECISKEVTQTIL). Residues 426-440 (GHPEREHVGRGDKRG) show a composition bias toward basic and acidic residues. Gly residues predominate over residues 482 to 498 (AGRGHRGGGAYRGGGRG). The span at 501-513 (QRVEKEFRKEGVL) shows a compositional bias: basic and acidic residues.

The protein belongs to the RNF25 family.

Its subcellular location is the cytoplasm. It carries out the reaction S-ubiquitinyl-[E2 ubiquitin-conjugating enzyme]-L-cysteine + [acceptor protein]-L-lysine = [E2 ubiquitin-conjugating enzyme]-L-cysteine + N(6)-ubiquitinyl-[acceptor protein]-L-lysine.. It functions in the pathway protein modification; protein ubiquitination. E3 ubiquitin-protein ligase that plays a key role in the RNF14-RNF25 translation quality control pathway, a pathway that takes place when a ribosome has stalled during translation, and which promotes ubiquitination and degradation of translation factors on stalled ribosomes. May also acts as a positive regulator of the Wnt signaling. The polypeptide is E3 ubiquitin-protein ligase RNF25 (Danio rerio (Zebrafish)).